We begin with the raw amino-acid sequence, 153 residues long: MISQSTLFLFILLIIGLIAKNQSLIVAICVLFVLKWTFLGDKILPYLQTKGINLGVTVITIAVLVPIATGEIGFKQLGEATKSYYAWIALASGIAVALLAKGGLQLLTNDPHITTALVFGTIIAVALFNGVAVGPLIGAGIAYAVMNIIQMFK.

The next 4 membrane-spanning stretches (helical) occupy residues 8–28 (FLFILLIIGLIAKNQSLIVAI), 54–74 (LGVTVITIAVLVPIATGEIGF), 87–107 (WIALASGIAVALLAKGGLQLL), and 117–137 (LVFGTIIAVALFNGVAVGPLI).

Belongs to the UPF0756 family.

The protein resides in the cell membrane. This chain is UPF0756 membrane protein Bcer98_3279, found in Bacillus cytotoxicus (strain DSM 22905 / CIP 110041 / 391-98 / NVH 391-98).